The chain runs to 664 residues: Probable 3',5'-cyclic phosphodiesterase pde-1 (664 aa).

2 disordered regions span residues 24 to 60 and 113 to 142; these read TSSA…SIKI and RNQK…KSYD. Basic and acidic residues-rich tracts occupy residues 28–38 and 114–130; these read SEEHGDSDKKL and NQKE…EKEP. In terms of domain architecture, PDEase spans 256–634; it reads VQCPIPPEIA…AHWKERAAKE (379 aa). The active-site Proton donor is His333. The a divalent metal cation site is built by His337, His373, Asp374, and Asp480. Disordered stretches follow at residues 564 to 597 and 630 to 664; these read DSLF…TSPS and RAAK…VTTN. Over residues 630–644 the composition is skewed to basic and acidic residues; the sequence is RAAKEEEERKIKEAA.

This sequence belongs to the cyclic nucleotide phosphodiesterase family. Interacts with cmd-1 in the presence of Ca(2+). It depends on a divalent metal cation as a cofactor. Expressed in AFD thermosensory neurons.

The catalysed reaction is a nucleoside 3',5'-cyclic phosphate + H2O = a nucleoside 5'-phosphate + H(+). In terms of biological role, redundantly with pde-5, plays a role in the AFD thermosensory neurons to regulate microvilli receptive ending morphology, possibly by regulating cGMP levels. This Caenorhabditis elegans protein is Probable 3',5'-cyclic phosphodiesterase pde-1 (pde-1).